The following is a 314-amino-acid chain: Homoserine O-succinyltransferase (314 aa).

Catalysis depends on Cys-142, which acts as the Acyl-thioester intermediate. 2 residues coordinate substrate: Lys-163 and Ser-192. Catalysis depends on His-235, which acts as the Proton acceptor. Glu-237 is an active-site residue. Arg-249 is a binding site for substrate.

It belongs to the MetA family.

It localises to the cytoplasm. The enzyme catalyses L-homoserine + succinyl-CoA = O-succinyl-L-homoserine + CoA. Its pathway is amino-acid biosynthesis; L-methionine biosynthesis via de novo pathway; O-succinyl-L-homoserine from L-homoserine: step 1/1. Functionally, transfers a succinyl group from succinyl-CoA to L-homoserine, forming succinyl-L-homoserine. The polypeptide is Homoserine O-succinyltransferase (Aeromonas salmonicida (strain A449)).